The chain runs to 432 residues: Tyrosine--tRNA ligase (432 aa).

Tyrosine 35 lines the L-tyrosine pocket. Positions 40–49 (PTAGSLHVGH) match the 'HIGH' region motif. L-tyrosine-binding residues include tyrosine 175 and glutamine 179. Positions 239-243 (KFGKT) match the 'KMSKS' region motif. Lysine 242 is a binding site for ATP. The S4 RNA-binding domain maps to 365–422 (PPLVDLFASTGLVPSKSAARRTIQEGGAYLNNAKVTDIEARVSEADLLHGRYLVLRRG).

Belongs to the class-I aminoacyl-tRNA synthetase family. TyrS type 1 subfamily. In terms of assembly, homodimer.

The protein localises to the cytoplasm. It carries out the reaction tRNA(Tyr) + L-tyrosine + ATP = L-tyrosyl-tRNA(Tyr) + AMP + diphosphate + H(+). Its function is as follows. Catalyzes the attachment of tyrosine to tRNA(Tyr) in a two-step reaction: tyrosine is first activated by ATP to form Tyr-AMP and then transferred to the acceptor end of tRNA(Tyr). This is Tyrosine--tRNA ligase from Thermobifida fusca (strain YX).